The sequence spans 92 residues: Small ribosomal subunit protein uS19 (92 aa).

Belongs to the universal ribosomal protein uS19 family.

Functionally, protein S19 forms a complex with S13 that binds strongly to the 16S ribosomal RNA. This is Small ribosomal subunit protein uS19 from Desulfosudis oleivorans (strain DSM 6200 / JCM 39069 / Hxd3) (Desulfococcus oleovorans).